Reading from the N-terminus, the 282-residue chain is S-formylglutathione hydrolase (282 aa).

Ala2 carries the N-acetylalanine modification. Lys4 bears the N6-succinyllysine mark. Residues Ser149, Asp226, and His260 each act as charge relay system in the active site.

Belongs to the esterase D family. In terms of assembly, homodimer.

The protein resides in the cytoplasm. Its subcellular location is the cytoplasmic vesicle. It catalyses the reaction S-formylglutathione + H2O = formate + glutathione + H(+). Serine hydrolase involved in the detoxification of formaldehyde. The chain is S-formylglutathione hydrolase (ESD) from Bos taurus (Bovine).